A 533-amino-acid polypeptide reads, in one-letter code: Protein mono-ADP-ribosyltransferase PARP3 (533 aa).

The segment at 1-30 (MAPKPKPWVQTEGPEKKKGRQAGREEDPFR) is disordered. Residue K6 is modified to N6-(ADP-ribosyl)lysine. ADP-ribosyl glutamic acid is present on residues E12, E15, E26, and E34. Positions 14–20 (PEKKKGR) match the Nuclear localization signal motif. Position 37 is an N6-(ADP-ribosyl)lysine (K37). One can recognise a WGR domain in the interval 59 to 150 (GTQVYEDYNC…DHFVSHPGKY (92 aa)). An ADP-ribosyl aspartic acid modification is found at D141. E163 carries the post-translational modification ADP-ribosyl glutamic acid. A PARP alpha-helical domain is found at 182–300 (PCSLDPATQK…DIELAQALQA (119 aa)). D210 carries the post-translational modification ADP-ribosyl aspartic acid. An ADP-ribosyl glutamic acid mark is found at E231, E309, E310, E344, and E449. Residues 313–533 (HPLDRDYQLL…RLRYLLEVHL (221 aa)) form the PARP catalytic domain. A disordered region spans residues 454–482 (TDNPSLKSPPPGFDSVIARGHTEPDPTQD).

The protein belongs to the ARTD/PARP family. Interacts with PARP1; leading to activate PARP1 in absence of DNA. Interacts with PRKDC. Interacts with XRCC5/Ku80; the interaction is dependent on nucleic acids. Interacts with XRCC6/Ku70; the interaction is dependent on nucleic acids. Interacts with EZH2, HDAC1, HDAC2, SUZ12, YY1, LRIG3 and LIG4. Auto-mono-ADP-ribosylated. In terms of tissue distribution, widely expressed; the highest levels are in the kidney, skeletal muscle, liver, heart and spleen; also detected in pancreas, lung, placenta, brain, leukocytes, colon, small intestine, ovary, testis, prostate and thymus.

It localises to the nucleus. The protein localises to the chromosome. Its subcellular location is the cytoplasm. The protein resides in the cytoskeleton. It is found in the microtubule organizing center. It localises to the centrosome. The protein localises to the centriole. It catalyses the reaction L-aspartyl-[protein] + NAD(+) = 4-O-(ADP-D-ribosyl)-L-aspartyl-[protein] + nicotinamide. It carries out the reaction L-glutamyl-[protein] + NAD(+) = 5-O-(ADP-D-ribosyl)-L-glutamyl-[protein] + nicotinamide. The enzyme catalyses L-lysyl-[protein] + NAD(+) = N(6)-(ADP-D-ribosyl)-L-lysyl-[protein] + nicotinamide + H(+). With respect to regulation, mono-ADP-ribosyltransferase activity of PARP3 is selectively inhibited by ME0328 compound; ME0328 does not inhibit other ARTD/PARP enzymes, such as PARP1. Mono-ADP-ribosyltransferase is strongly inhibited by KU0058948 compound. Functionally, mono-ADP-ribosyltransferase that mediates mono-ADP-ribosylation of target proteins and plays a key role in the response to DNA damage. Mediates mono-ADP-ribosylation of glutamate, aspartate or lysine residues on target proteins. In contrast to PARP1 and PARP2, it is not able to mediate poly-ADP-ribosylation. Involved in DNA repair by mediating mono-ADP-ribosylation of a limited number of acceptor proteins involved in chromatin architecture and in DNA metabolism, such as histone H2B, XRCC5 and XRCC6. ADP-ribosylation follows DNA damage and appears as an obligatory step in a detection/signaling pathway leading to the reparation of DNA strand breaks. Involved in single-strand break repair by catalyzing mono-ADP-ribosylation of histone H2B on 'Glu-2' (H2BE2ADPr) of nucleosomes containing nicked DNA. Cooperates with the XRCC5-XRCC6 (Ku80-Ku70) heterodimer to limit end-resection thereby promoting accurate NHEJ. Suppresses G-quadruplex (G4) structures in response to DNA damage. Associates with a number of DNA repair factors and is involved in the response to exogenous and endogenous DNA strand breaks. Together with APLF, promotes the retention of the LIG4-XRCC4 complex on chromatin and accelerate DNA ligation during non-homologous end-joining (NHEJ). May link the DNA damage surveillance network to the mitotic fidelity checkpoint. Acts as a negative regulator of immunoglobulin class switch recombination, probably by controlling the level of AICDA /AID on the chromatin. In addition to proteins, also able to ADP-ribosylate DNA: mediates DNA mono-ADP-ribosylation of DNA strand break termini via covalent addition of a single ADP-ribose moiety to a 5'- or 3'-terminal phosphate residues in DNA containing multiple strand breaks. This chain is Protein mono-ADP-ribosyltransferase PARP3, found in Homo sapiens (Human).